The following is a 336-amino-acid chain: MIEADRLIQPQVQGQDELIDRAMRPKMLDEYTGQDDTRAQLKVFIQAAINRREALDHMLIFGPPGLGKTTLAMIVANEMGVNIKSTSGPVLEKAGDLAALLTNLEEGDVLFIDEIHRLSPVVEEILYPAMEDYQLDIMIGDGPAARSIKLDLPPFTLIGATTRAGALTSPLRARFGIPLRLEFYNVADLTTIVTRSANVMNLEIDEQGAIEIAKRSRGTPRIANRLLRRVRDYAEVKHDGKVSQTVAEYALDLLDVDDQGFDYLDRKLLLAIIDKFMGGPVGLDNLAAAIGEDRETIEDVLEPFLIQQGFIQRTPRGRIASQRAYDHFSLVRPEKA.

The large ATPase domain (RuvB-L) stretch occupies residues 4 to 184 (ADRLIQPQVQ…FGIPLRLEFY (181 aa)). ATP-binding positions include R24, G65, K68, T69, T70, 131–133 (EDY), R174, Y184, and R221. T69 contributes to the Mg(2+) binding site. The interval 185–255 (NVADLTTIVT…VAEYALDLLD (71 aa)) is small ATPAse domain (RuvB-S). Residues 258–336 (DQGFDYLDRK…HFSLVRPEKA (79 aa)) form a head domain (RuvB-H) region. The DNA site is built by R294, R313, and R318.

It belongs to the RuvB family. Homohexamer. Forms an RuvA(8)-RuvB(12)-Holliday junction (HJ) complex. HJ DNA is sandwiched between 2 RuvA tetramers; dsDNA enters through RuvA and exits via RuvB. An RuvB hexamer assembles on each DNA strand where it exits the tetramer. Each RuvB hexamer is contacted by two RuvA subunits (via domain III) on 2 adjacent RuvB subunits; this complex drives branch migration. In the full resolvosome a probable DNA-RuvA(4)-RuvB(12)-RuvC(2) complex forms which resolves the HJ.

The protein localises to the cytoplasm. It carries out the reaction ATP + H2O = ADP + phosphate + H(+). In terms of biological role, the RuvA-RuvB-RuvC complex processes Holliday junction (HJ) DNA during genetic recombination and DNA repair, while the RuvA-RuvB complex plays an important role in the rescue of blocked DNA replication forks via replication fork reversal (RFR). RuvA specifically binds to HJ cruciform DNA, conferring on it an open structure. The RuvB hexamer acts as an ATP-dependent pump, pulling dsDNA into and through the RuvAB complex. RuvB forms 2 homohexamers on either side of HJ DNA bound by 1 or 2 RuvA tetramers; 4 subunits per hexamer contact DNA at a time. Coordinated motions by a converter formed by DNA-disengaged RuvB subunits stimulates ATP hydrolysis and nucleotide exchange. Immobilization of the converter enables RuvB to convert the ATP-contained energy into a lever motion, pulling 2 nucleotides of DNA out of the RuvA tetramer per ATP hydrolyzed, thus driving DNA branch migration. The RuvB motors rotate together with the DNA substrate, which together with the progressing nucleotide cycle form the mechanistic basis for DNA recombination by continuous HJ branch migration. Branch migration allows RuvC to scan DNA until it finds its consensus sequence, where it cleaves and resolves cruciform DNA. The polypeptide is Holliday junction branch migration complex subunit RuvB (Shewanella frigidimarina (strain NCIMB 400)).